The chain runs to 123 residues: UPF0102 protein PSPPH_4120 (123 aa).

The protein belongs to the UPF0102 family.

This Pseudomonas savastanoi pv. phaseolicola (strain 1448A / Race 6) (Pseudomonas syringae pv. phaseolicola (strain 1448A / Race 6)) protein is UPF0102 protein PSPPH_4120.